Reading from the N-terminus, the 411-residue chain is Serine hydroxymethyltransferase (411 aa).

Residues L113 and 117 to 119 (GHL) contribute to the (6S)-5,6,7,8-tetrahydrofolate site. K222 is subject to N6-(pyridoxal phosphate)lysine. 346-348 (SPF) contributes to the (6S)-5,6,7,8-tetrahydrofolate binding site.

Belongs to the SHMT family. As to quaternary structure, homodimer. Pyridoxal 5'-phosphate serves as cofactor.

The protein localises to the cytoplasm. The catalysed reaction is (6R)-5,10-methylene-5,6,7,8-tetrahydrofolate + glycine + H2O = (6S)-5,6,7,8-tetrahydrofolate + L-serine. It participates in one-carbon metabolism; tetrahydrofolate interconversion. It functions in the pathway amino-acid biosynthesis; glycine biosynthesis; glycine from L-serine: step 1/1. Its function is as follows. Catalyzes the reversible interconversion of serine and glycine with tetrahydrofolate (THF) serving as the one-carbon carrier. This reaction serves as the major source of one-carbon groups required for the biosynthesis of purines, thymidylate, methionine, and other important biomolecules. Also exhibits THF-independent aldolase activity toward beta-hydroxyamino acids, producing glycine and aldehydes, via a retro-aldol mechanism. The chain is Serine hydroxymethyltransferase from Prochlorococcus marinus (strain NATL2A).